The sequence spans 146 residues: Prepilin peptidase-dependent protein D (146 aa).

The propeptide at 1 to 6 is leader sequence; it reads MDKQRG. Position 7 is an N-methylphenylalanine (Phe-7). The helical transmembrane segment at 7–27 threads the bilayer; sequence FTLIELMVVIGIIAILSAIGI.

The protein belongs to the N-Me-Phe pilin family.

The protein resides in the fimbrium. Its subcellular location is the membrane. In terms of biological role, major component of the type IV pilus (T4P) that plays a role in cell adhesion and motility. Not produced when grown under standard laboratory conditions. This is Prepilin peptidase-dependent protein D (ppdD) from Escherichia coli (strain K12).